We begin with the raw amino-acid sequence, 297 residues long: Nucleotide-binding protein Bphyt_0592 (297 aa).

Residue 8 to 15 (GISGSGKS) participates in ATP binding. 57-60 (DARS) provides a ligand contact to GTP.

Belongs to the RapZ-like family.

Displays ATPase and GTPase activities. The polypeptide is Nucleotide-binding protein Bphyt_0592 (Paraburkholderia phytofirmans (strain DSM 17436 / LMG 22146 / PsJN) (Burkholderia phytofirmans)).